The following is a 167-amino-acid chain: Ribosome-binding factor A (167 aa).

A disordered region spans residues 122–167 (LAASAKHAGEADPYKGDSPEDIDEDDFDEEDTDLSGDNDLDEDANR). Over residues 128 to 139 (HAGEADPYKGDS) the composition is skewed to basic and acidic residues. Over residues 140–167 (PEDIDEDDFDEEDTDLSGDNDLDEDANR) the composition is skewed to acidic residues.

It belongs to the RbfA family. Monomer. Binds 30S ribosomal subunits, but not 50S ribosomal subunits or 70S ribosomes.

It localises to the cytoplasm. Functionally, one of several proteins that assist in the late maturation steps of the functional core of the 30S ribosomal subunit. Associates with free 30S ribosomal subunits (but not with 30S subunits that are part of 70S ribosomes or polysomes). Required for efficient processing of 16S rRNA. May interact with the 5'-terminal helix region of 16S rRNA. The chain is Ribosome-binding factor A from Paenarthrobacter aurescens (strain TC1).